We begin with the raw amino-acid sequence, 642 residues long: Threonine--tRNA ligase (642 aa).

Positions 1-61 (MPVITLPDGS…ESDAQLAIIT (61 aa)) constitute a TGS domain. Positions 243–534 (DHRKIGKQLD…LTEEYAGFFP (292 aa)) are catalytic. The Zn(2+) site is built by C334, H385, and H511.

The protein belongs to the class-II aminoacyl-tRNA synthetase family. Homodimer. Requires Zn(2+) as cofactor.

It localises to the cytoplasm. It catalyses the reaction tRNA(Thr) + L-threonine + ATP = L-threonyl-tRNA(Thr) + AMP + diphosphate + H(+). In terms of biological role, catalyzes the attachment of threonine to tRNA(Thr) in a two-step reaction: L-threonine is first activated by ATP to form Thr-AMP and then transferred to the acceptor end of tRNA(Thr). Also edits incorrectly charged L-seryl-tRNA(Thr). This Yersinia pseudotuberculosis serotype O:1b (strain IP 31758) protein is Threonine--tRNA ligase.